A 181-amino-acid polypeptide reads, in one-letter code: Adenine phosphoribosyltransferase (181 aa).

The protein belongs to the purine/pyrimidine phosphoribosyltransferase family. As to quaternary structure, homodimer.

It localises to the cytoplasm. It catalyses the reaction AMP + diphosphate = 5-phospho-alpha-D-ribose 1-diphosphate + adenine. It functions in the pathway purine metabolism; AMP biosynthesis via salvage pathway; AMP from adenine: step 1/1. In terms of biological role, catalyzes a salvage reaction resulting in the formation of AMP, that is energically less costly than de novo synthesis. This is Adenine phosphoribosyltransferase from Methylorubrum populi (strain ATCC BAA-705 / NCIMB 13946 / BJ001) (Methylobacterium populi).